A 725-amino-acid chain; its full sequence is Kelch domain-containing protein SSO1033 (725 aa).

An N-terminal signal peptide occupies residues 1–28; sequence MKYGNMKKWAPLILFLFSLLLLQGISLH. Kelch repeat units lie at residues 59-100, 101-145, 146-199, 201-248, 250-297, and 299-342; these read SLYI…VYNN, TIYV…VYNN, AIYV…FNGT, LIIV…YYRG, LFIV…QVGN, and LYLA…VTLG. Fibronectin type-III domains lie at 323–410, 411–504, 505–583, and 585–665; these read PPLP…TPAS, VPNP…TKAS, VFAF…VVYY, and PPAS…TGDY.

This Saccharolobus solfataricus (strain ATCC 35092 / DSM 1617 / JCM 11322 / P2) (Sulfolobus solfataricus) protein is Kelch domain-containing protein SSO1033.